A 582-amino-acid chain; its full sequence is Calcium-dependent protein kinase 24 (582 aa).

Residues 1–36 are disordered; that stretch reads MGSCVSSPLKGSPFGKRPVRRRHSSNSRTSSVPRFD. Gly-2 carries the N-myristoyl glycine lipid modification. Positions 66 to 324 constitute a Protein kinase domain; sequence YDLGKELGRG…VQEVLEHPWI (259 aa). ATP-binding positions include 72 to 80 and Lys-95; that span reads LGRGEFGVT. Asp-190 (proton acceptor) is an active-site residue. Residue Ser-230 is modified to Phosphoserine. The segment at 330–360 is autoinhibitory domain; it reads APNVNLGDNVRTKIQQFLLMNRFKKKVLRIV. 4 consecutive EF-hand domains span residues 367-402, 403-438, 439-474, and 478-513; these read EEIA…IGQV, VPDG…LKRM, GCDE…DKLG, and GNDQ…GTDW. Asp-380, Asp-382, Asn-384, His-386, Glu-391, Asp-416, Asp-418, Asn-420, Met-422, Glu-427, Asp-452, Asn-454, Asn-456, Glu-463, Asp-491, Asn-493, Asp-495, and Arg-497 together coordinate Ca(2+). Ser-499 carries the phosphoserine modification. Ca(2+) is bound at residue Glu-502.

The protein belongs to the protein kinase superfamily. Ser/Thr protein kinase family. CDPK subfamily.

Its subcellular location is the membrane. The catalysed reaction is L-seryl-[protein] + ATP = O-phospho-L-seryl-[protein] + ADP + H(+). It carries out the reaction L-threonyl-[protein] + ATP = O-phospho-L-threonyl-[protein] + ADP + H(+). Its activity is regulated as follows. Activated by calcium. Autophosphorylation may play an important role in the regulation of the kinase activity. Its function is as follows. May play a role in signal transduction pathways that involve calcium as a second messenger. The sequence is that of Calcium-dependent protein kinase 24 (CPK24) from Arabidopsis thaliana (Mouse-ear cress).